Reading from the N-terminus, the 137-residue chain is Lysozyme (137 aa).

The N-terminal stretch at 1 to 20 (MQRLLGSIVILATVFTFCEA) is a signal peptide. An I-type lysozyme domain is found at 21-135 (TISSACLRCI…EKVHQQGCNV (115 aa)). 6 disulfides stabilise this stretch: Cys26–Cys102, Cys31–Cys37, Cys42–Cys51, Cys64–Cys84, Cys74–Cys80, and Cys98–Cys116. Glu34 serves as the catalytic Proton donor. Asp45 acts as the Nucleophile in catalysis. 57–63 (KENYWED) provides a ligand contact to substrate. Residues Tyr88 and 109-111 (HNG) contribute to the substrate site.

It belongs to the glycosyl hydrolase 22 family. Type-I lysozyme subfamily. As to expression, expressed in the basophil cells of the oyster digestive gland.

It is found in the secreted. It carries out the reaction Hydrolysis of (1-&gt;4)-beta-linkages between N-acetylmuramic acid and N-acetyl-D-glucosamine residues in a peptidoglycan and between N-acetyl-D-glucosamine residues in chitodextrins.. Has bacteriolytic activity. May play a role in digestion and in the host defense mechanisms against invading microbes. The protein is Lysozyme (lysoz) of Magallana gigas (Pacific oyster).